The following is a 207-amino-acid chain: Ras-related protein Rab-8A (207 aa).

The GTP site is built by S17, G18, V19, G20, K21, T22, C23, S35, S39, and T40. T22 contacts Mg(2+). 2 short sequence motifs (switch) span residues 31-45 and 63-80; these read DAFN…GIDF and DTAG…YYRG. Mg(2+) is bound by residues T40 and D63. G66 contacts GTP. A Phosphothreonine modification is found at T72. The GTP site is built by N121, K122, D124, A152, and K153. Phosphoserine is present on residues S181 and S185. C204 carries the post-translational modification Cysteine methyl ester. Residue C204 is the site of S-geranylgeranyl cysteine attachment. A propeptide spans 205–207 (removed in mature form); sequence VLL.

The protein belongs to the small GTPase superfamily. Rab family. In terms of assembly, interacts (GTP-bound form) with MICALL1; regulates RAB8A association with recycling endosomes. Interacts with MICALL2; competes with RAB13 and is involved in E-cadherin endocytic recycling. Interacts (GTP-bound form) with MICAL1, MICALCL, MICAL3, EHBP1 and EHBP1L1; at least in case of MICAL1, MICALCL, MICAL3 and EHBP1L1 two molecules of RAB8A can bind to one molecule of the effector protein; ternary complexes of RAB8A, RAB13 and either MICAL1 or EHBP1L1 are possible. Interacts with EHD1. Interacts with MAP4K2 and SYTL4. Interacts with SGSM1 and SGSM3. Interacts with RABIF, RIMS2, RPH3A and RPH3A. Interacts with OPTN. Interacts with RAB3IP, RAB3IP functions as guanine exchange factor (GEF). Interacts with MYO5B. Interacts with CIMAP3. Interacts with BIRC6/bruce. Interacts with OCRL. Interacts with AHI1. Interacts with DCDC1. Interacts with LRRK2; interaction facilitates phosphorylation of Thr-72. Interacts with RAB31P, GDI1, GDI2, CHM, CHML, RABGGTA, RABGGTB, TBC1D15 and INPP5B; these interactions are dependent on Thr-72 not being phosphorylated. Interacts with RILPL1 and RILPL2; these interactions are dependent on the phosphorylation of Thr-72 by LRRK2. Interacts with DZIP1; prevents inhibition by the GDP-dissociation inhibitor GDI2. Interacts (in GDP-bound form) with RAB3IP/Rabin8, RAB3IP functions as guanine exchange factor (GEF) towards RAB8A. Interacts (in GDP-bound form) with RPGR, RPGR functions as GEF towards RAB8A. Mg(2+) is required as a cofactor. Phosphorylation of Thr-72 in the switch II region by LRRK2 prevents the association of RAB regulatory proteins, including CHM, CHML and RAB GDP dissociation inhibitors GDI1 and GDI2. Phosphorylation by LRRK2 is required for localization to stressed lysosomes.

Its subcellular location is the cell membrane. The protein localises to the golgi apparatus. The protein resides in the endosome membrane. It is found in the recycling endosome membrane. It localises to the cell projection. Its subcellular location is the cilium. The protein localises to the cytoplasmic vesicle. The protein resides in the phagosome membrane. It is found in the cytoplasm. It localises to the cytoskeleton. Its subcellular location is the microtubule organizing center. The protein localises to the centrosome. The protein resides in the centriole. It is found in the cilium basal body. It localises to the midbody. Its subcellular location is the lysosome. It carries out the reaction GTP + H2O = GDP + phosphate + H(+). With respect to regulation, regulated by guanine nucleotide exchange factors (GEFs) such as RAB3IP/Rabin8 and RPGR which promote the exchange of bound GDP for free GTP, GTPase activating proteins (GAPs) which increase the GTP hydrolysis activity, and GDP dissociation inhibitors (GDIs) which inhibit the dissociation of the nucleotide from the GTPase. Activated in response to insulin. Its function is as follows. The small GTPases Rab are key regulators of intracellular membrane trafficking, from the formation of transport vesicles to their fusion with membranes. Rabs cycle between an inactive GDP-bound form and an active GTP-bound form that is able to recruit to membranes different sets of downstream effectors directly responsible for vesicle formation, movement, tethering and fusion. RAB8A is involved in polarized vesicular trafficking and neurotransmitter release. Together with RAB11A, RAB3IP, the exocyst complex, PARD3, PRKCI, ANXA2, CDC42 and DNMBP promotes transcytosis of PODXL to the apical membrane initiation sites (AMIS), apical surface formation and lumenogenesis. Regulates the compacted morphology of the Golgi. Together with MYO5B and RAB11A participates in epithelial cell polarization. Also involved in membrane trafficking to the cilium and ciliogenesis. Together with MICALL2, may also regulate adherens junction assembly. May play a role in insulin-induced transport to the plasma membrane of the glucose transporter GLUT4 and therefore play a role in glucose homeostasis. Involved in autophagy. Participates in the export of a subset of neosynthesized proteins through a Rab8-Rab10-Rab11-dependent endososomal export route. Targeted to and stabilized on stressed lysosomes through LRRK2 phosphorylation. Suppresses stress-induced lysosomal enlargement through EHBP1 and EHNP1L1 effector proteins. The sequence is that of Ras-related protein Rab-8A (RAB8A) from Canis lupus familiaris (Dog).